The primary structure comprises 285 residues: Release factor glutamine methyltransferase (285 aa).

S-adenosyl-L-methionine contacts are provided by D143 and N189. Substrate is bound at residue N189 to Y192.

This sequence belongs to the protein N5-glutamine methyltransferase family. PrmC subfamily.

The enzyme catalyses L-glutaminyl-[peptide chain release factor] + S-adenosyl-L-methionine = N(5)-methyl-L-glutaminyl-[peptide chain release factor] + S-adenosyl-L-homocysteine + H(+). Its function is as follows. Methylates the class 1 translation termination release factors RF1/PrfA and RF2/PrfB on the glutamine residue of the universally conserved GGQ motif. This Clostridium acetobutylicum (strain ATCC 824 / DSM 792 / JCM 1419 / IAM 19013 / LMG 5710 / NBRC 13948 / NRRL B-527 / VKM B-1787 / 2291 / W) protein is Release factor glutamine methyltransferase.